We begin with the raw amino-acid sequence, 225 residues long: Uracil-DNA glycosylase (225 aa).

Aspartate 65 functions as the Proton acceptor in the catalytic mechanism.

Belongs to the uracil-DNA glycosylase (UDG) superfamily. UNG family.

The protein resides in the cytoplasm. The enzyme catalyses Hydrolyzes single-stranded DNA or mismatched double-stranded DNA and polynucleotides, releasing free uracil.. Functionally, excises uracil residues from the DNA which can arise as a result of misincorporation of dUMP residues by DNA polymerase or due to deamination of cytosine. This chain is Uracil-DNA glycosylase, found in Lysinibacillus sphaericus (strain C3-41).